Reading from the N-terminus, the 434-residue chain is Nicotinate phosphoribosyltransferase (434 aa).

Residue H242 is modified to Phosphohistidine; by autocatalysis.

This sequence belongs to the NAPRTase family. Post-translationally, transiently phosphorylated on a His residue during the reaction cycle. Phosphorylation strongly increases the affinity for substrates and increases the rate of nicotinate D-ribonucleotide production. Dephosphorylation regenerates the low-affinity form of the enzyme, leading to product release.

The catalysed reaction is nicotinate + 5-phospho-alpha-D-ribose 1-diphosphate + ATP + H2O = nicotinate beta-D-ribonucleotide + ADP + phosphate + diphosphate. It participates in cofactor biosynthesis; NAD(+) biosynthesis; nicotinate D-ribonucleotide from nicotinate: step 1/1. Its function is as follows. Catalyzes the synthesis of beta-nicotinate D-ribonucleotide from nicotinate and 5-phospho-D-ribose 1-phosphate at the expense of ATP. The sequence is that of Nicotinate phosphoribosyltransferase from Rhizobium rhizogenes (strain K84 / ATCC BAA-868) (Agrobacterium radiobacter).